The sequence spans 305 residues: MRTSTARRTGTALAVAAALTSIAACSGSDGAKGSDGAGEGKAGAVSKASPVAALKQVQQKTGGAQSAKVEGTTEMGSVMSMKQSGAIGWADGLSGALTITYTGGTMGDALKQAGGDGSVQARYFKDEYYANMGDAMAANTGGKHWIRYSYKDLAELGGASGDVMKDQIQNSTPEQGVKALLASGDVKKVGQEDVRGVPATHYSGTVDVAGLTAKNSNLDAEQLAAFKEQLALAGVTTQTVDIWVDKNDLLVKKTERGEMKTGSFNSTIFYSDYGTEVPTEKPAASDTVDFKEMLKQGGATPGATS.

This is an uncharacterized protein from Streptomyces griseus.